Consider the following 315-residue polypeptide: Lamassu protein LmuA (315 aa).

Functionally, component of antiviral defense system Lamassu type I, composed of LmuA and LmuB. Expression of Lamassu type I in B.subtilis (strain BEST7003) confers resistance to phages phi3T, SpBeta and SPR. The protein is Lamassu protein LmuA of Bacillus sp. (strain NCIM 5461 / CCTCC AB 2011126 / NIO-1130).